The primary structure comprises 1377 residues: DNA-directed RNA polymerase subunit beta' (1377 aa).

Zn(2+) contacts are provided by cysteine 70, cysteine 72, cysteine 85, and cysteine 88. The Mg(2+) site is built by aspartate 460, aspartate 462, and aspartate 464. Positions 808, 882, 889, and 892 each coordinate Zn(2+).

It belongs to the RNA polymerase beta' chain family. As to quaternary structure, the RNAP catalytic core consists of 2 alpha, 1 beta, 1 beta' and 1 omega subunit. When a sigma factor is associated with the core the holoenzyme is formed, which can initiate transcription. Requires Mg(2+) as cofactor. The cofactor is Zn(2+).

It catalyses the reaction RNA(n) + a ribonucleoside 5'-triphosphate = RNA(n+1) + diphosphate. DNA-dependent RNA polymerase catalyzes the transcription of DNA into RNA using the four ribonucleoside triphosphates as substrates. The chain is DNA-directed RNA polymerase subunit beta' from Geotalea daltonii (strain DSM 22248 / JCM 15807 / FRC-32) (Geobacter daltonii).